The chain runs to 242 residues: Small ribosomal subunit protein uS2 (242 aa).

It belongs to the universal ribosomal protein uS2 family.

The protein is Small ribosomal subunit protein uS2 of Aeromonas hydrophila subsp. hydrophila (strain ATCC 7966 / DSM 30187 / BCRC 13018 / CCUG 14551 / JCM 1027 / KCTC 2358 / NCIMB 9240 / NCTC 8049).